We begin with the raw amino-acid sequence, 877 residues long: Alanine--tRNA ligase (877 aa).

H567, H571, C669, and H673 together coordinate Zn(2+).

The protein belongs to the class-II aminoacyl-tRNA synthetase family. Requires Zn(2+) as cofactor.

The protein resides in the cytoplasm. It catalyses the reaction tRNA(Ala) + L-alanine + ATP = L-alanyl-tRNA(Ala) + AMP + diphosphate. Catalyzes the attachment of alanine to tRNA(Ala) in a two-step reaction: alanine is first activated by ATP to form Ala-AMP and then transferred to the acceptor end of tRNA(Ala). Also edits incorrectly charged Ser-tRNA(Ala) and Gly-tRNA(Ala) via its editing domain. The chain is Alanine--tRNA ligase from Rickettsia rickettsii (strain Iowa).